Consider the following 488-residue polypeptide: Facilitated trehalose transporter Tret1-2 homolog (488 aa).

The Cytoplasmic portion of the chain corresponds to 1–28; sequence MKILMRADTHVSYSVPAEGPKANFTFSQ. The chain crosses the membrane as a helical span at residues 29–49; that stretch reads VLAALSVSLCSLVVGFVSAYT. Topologically, residues 50–72 are extracellular; that stretch reads SPALVSMTDRTITSFEVTKDAGS. Residues 73–93 form a helical membrane-spanning segment; sequence WVGGIMPLAALAGGITGGPLI. Topologically, residues 94 to 105 are cytoplasmic; it reads EYLGRRTTILAT. The helical transmembrane segment at 106 to 126 threads the bilayer; the sequence is AVPFIVSSLLIACAVNVIMIL. The Extracellular segment spans residues 127 to 129; that stretch reads CGR. A helical membrane pass occupies residues 130–150; that stretch reads FLTGFCVGIASLSLPVYLGET. Topologically, residues 151 to 160 are cytoplasmic; it reads LQPEVRGTLG. The helical transmembrane segment at 161 to 181 threads the bilayer; sequence LLPTALGNIGILVCYVAGSFM. Asn-182 carries an N-linked (GlcNAc...) asparagine glycan. Residues 182–184 lie on the Extracellular side of the membrane; it reads NWS. Residues 185 to 205 traverse the membrane as a helical segment; it reads MLAFLGAALPVPFLILMIIIP. Over 206 to 268 the chain is Cytoplasmic; sequence ETPRWFVNRG…ELFKRINLKP (63 aa). Residues 269 to 289 form a helical membrane-spanning segment; sequence LSISLGLMFFQQFSGINAVIF. The Extracellular segment spans residues 290 to 305; the sequence is YTVQIFKDAGSTIDSN. The helical transmembrane segment at 306 to 326 threads the bilayer; sequence LCTIIVGIVNFFATFMGILLI. Residues 327–332 lie on the Cytoplasmic side of the membrane; that stretch reads DRLGRK. Residues 333 to 353 form a helical membrane-spanning segment; that stretch reads ILLYISDIAMILTLSILGGFF. Residues 354–372 are Extracellular-facing; the sequence is YCKAHGPDVSHLGWLPLTC. The chain crosses the membrane as a helical span at residues 373–393; that stretch reads FVIYILGFSLGFGPIPWLMMG. Topologically, residues 394 to 402 are cytoplasmic; sequence EILPAKIRG. Residues 403–423 traverse the membrane as a helical segment; it reads PAASVVTAFNWFCTFVVTKTF. Residues 424 to 433 are Extracellular-facing; the sequence is QDLTVAMGAH. Residues 434–454 traverse the membrane as a helical segment; it reads GAFWLFGVVCIVGLFFVIICV. Over 455–488 the chain is Cytoplasmic; it reads PETRGKSLEEIERKMMGRVPISAVVNIKPFSFNM.

The protein belongs to the major facilitator superfamily. Sugar transporter (TC 2.A.1.1) family. Trehalose transporter subfamily.

The protein resides in the cell membrane. Fails to transport trehalose. The chain is Facilitated trehalose transporter Tret1-2 homolog from Drosophila simulans (Fruit fly).